Consider the following 361-residue polypeptide: DNA replication and repair protein RecF (361 aa).

Residue 30-37 coordinates ATP; that stretch reads GDNAQGKT.

The protein belongs to the RecF family.

The protein resides in the cytoplasm. Its function is as follows. The RecF protein is involved in DNA metabolism; it is required for DNA replication and normal SOS inducibility. RecF binds preferentially to single-stranded, linear DNA. It also seems to bind ATP. In Clostridium perfringens (strain ATCC 13124 / DSM 756 / JCM 1290 / NCIMB 6125 / NCTC 8237 / Type A), this protein is DNA replication and repair protein RecF.